A 519-amino-acid chain; its full sequence is MTPANKSDKDRVVIFDTTLRDGEQCPGATMTFEEKIEVAEMLDGMGVDIIEAGFPIASVGDFEAVAEIARNARNAVIAGLARAIPGDIARAGEAVRHARRGRIHTFVSTSPIHLAHQMRKSEAEVLEIITATVKQARNLVEDVEWSAMDATRTPIDYLCKCVEAAIAAGATTINLPDTVGYAVPDEYRRMFKTIRERVPSADKAIFSVHCHDDLGLAVANSLAGVEGGARQVESTINGIGERAGNAALEEVVMAIKTRADVMPYWCNVESTMLTRASKMVSAATSFPVQYNKAIVGRNAFAHESGIHQDGMLKNAQTYEIMTPESVGVKQTSLVMGKHSGRHAFQHKLEELGYKLAENQLQDAFVRFKALADRKKDIYDEDIIALVDEEMAATHDRIKLSSLTVIAGTHGPQRATMKLTVSGQTRIEEAEGNGPVDAVFNCIKRLVPHEAKLELYQVHAVTQGTDAQAEVSVRLSQDGRAMTSKAADPDTLVASAKAYLGALNKIVMKHQRDVPAAAAS.

In terms of domain architecture, Pyruvate carboxyltransferase spans 12–274 (VVIFDTTLRD…WCNVESTMLT (263 aa)). Residues Asp21, His209, His211, and Asn245 each coordinate Mn(2+). Residues 398-519 (KLSSLTVIAG…QRDVPAAAAS (122 aa)) are regulatory domain.

This sequence belongs to the alpha-IPM synthase/homocitrate synthase family. LeuA type 1 subfamily. As to quaternary structure, homodimer. The cofactor is Mn(2+).

The protein resides in the cytoplasm. The catalysed reaction is 3-methyl-2-oxobutanoate + acetyl-CoA + H2O = (2S)-2-isopropylmalate + CoA + H(+). Its pathway is amino-acid biosynthesis; L-leucine biosynthesis; L-leucine from 3-methyl-2-oxobutanoate: step 1/4. Its function is as follows. Catalyzes the condensation of the acetyl group of acetyl-CoA with 3-methyl-2-oxobutanoate (2-ketoisovalerate) to form 3-carboxy-3-hydroxy-4-methylpentanoate (2-isopropylmalate). The protein is 2-isopropylmalate synthase of Nitrobacter winogradskyi (strain ATCC 25391 / DSM 10237 / CIP 104748 / NCIMB 11846 / Nb-255).